The chain runs to 32 residues: U21-ctenitoxin-Co1a (32 aa).

3 cysteine pairs are disulfide-bonded: Cys-3–Cys-17, Cys-10–Cys-21, and Cys-16–Cys-30.

Expressed by the venom gland.

The protein localises to the secreted. Not toxic to mice by intracerebroventricular injection. The chain is U21-ctenitoxin-Co1a from Ctenus ornatus (Brazilian spider).